A 652-amino-acid polypeptide reads, in one-letter code: Acetyl-coenzyme A synthetase (652 aa).

Residues 189 to 192 and Thr-311 contribute to the CoA site; that span reads RGGK. Residues 387 to 389, 411 to 416, Asp-500, and Arg-515 contribute to the ATP site; these read GEP and DTWWQT. Ser-523 lines the CoA pocket. Arg-526 is an ATP binding site. Residues Val-537, His-539, and Val-542 each coordinate Mg(2+). A CoA-binding site is contributed by Arg-584. Lys-609 bears the N6-acetyllysine mark.

The protein belongs to the ATP-dependent AMP-binding enzyme family. It depends on Mg(2+) as a cofactor. Acetylated. Deacetylation by the SIR2-homolog deacetylase activates the enzyme.

The catalysed reaction is acetate + ATP + CoA = acetyl-CoA + AMP + diphosphate. Its function is as follows. Catalyzes the conversion of acetate into acetyl-CoA (AcCoA), an essential intermediate at the junction of anabolic and catabolic pathways. AcsA undergoes a two-step reaction. In the first half reaction, AcsA combines acetate with ATP to form acetyl-adenylate (AcAMP) intermediate. In the second half reaction, it can then transfer the acetyl group from AcAMP to the sulfhydryl group of CoA, forming the product AcCoA. The polypeptide is Acetyl-coenzyme A synthetase (Bartonella henselae (strain ATCC 49882 / DSM 28221 / CCUG 30454 / Houston 1) (Rochalimaea henselae)).